Reading from the N-terminus, the 337-residue chain is MLIKLPRSSECKASEITPEGIYLSRRTLLGGSLAGLALGALPGGVGAAQMSRYADVQAGAAPAWFTDKLAATRWQAVTVKDEAITPFKDATHYNNFYEFGPDKGDPAANGDSLKTEPWSIVVDGEVRKPGRYALEDFVKPYQLEERIYRLRCVEAWSMVIPWLGFPLAQVLKQVEPTSSARYVRFETLKDPQHMPGQRSGFALIDWPYREGLRLDEAMHPLAILAVGMYGRELPNQNGAPLRLVVPWKYGFKSIKSIVRISLVAEQPGTTWEGLAPDEYGFYANVNPTVDHPRWSQARERRLPSGLFSPNVRETQMFNGYADEVASLYTGLDLRKNY.

Residues 1–54 (MLIKLPRSSECKASEITPEGIYLSRRTLLGGSLAGLALGALPGGVGAAQMSRYA) constitute a signal peptide (tat-type signal). Mo-molybdopterin-binding positions include Asn94, 97 to 98 (YE), Cys152, Thr187, Asn237, Arg242, and 253 to 255 (SIK).

Belongs to the MsrP family. Heterodimer of a catalytic subunit (MsrP) and a heme-binding subunit (MsrQ). Requires Mo-molybdopterin as cofactor. Post-translationally, predicted to be exported by the Tat system. The position of the signal peptide cleavage has not been experimentally proven.

It localises to the periplasm. It carries out the reaction L-methionyl-[protein] + a quinone + H2O = L-methionyl-(S)-S-oxide-[protein] + a quinol. The enzyme catalyses L-methionyl-[protein] + a quinone + H2O = L-methionyl-(R)-S-oxide-[protein] + a quinol. Its function is as follows. Part of the MsrPQ system that repairs oxidized periplasmic proteins containing methionine sulfoxide residues (Met-O), using respiratory chain electrons. Thus protects these proteins from oxidative-stress damage caused by reactive species of oxygen and chlorine generated by the host defense mechanisms. MsrPQ is essential for the maintenance of envelope integrity under bleach stress, rescuing a wide series of structurally unrelated periplasmic proteins from methionine oxidation. The catalytic subunit MsrP is non-stereospecific, being able to reduce both (R-) and (S-) diastereoisomers of methionine sulfoxide. This Pseudomonas putida (strain ATCC 47054 / DSM 6125 / CFBP 8728 / NCIMB 11950 / KT2440) protein is Protein-methionine-sulfoxide reductase catalytic subunit MsrP.